Consider the following 697-residue polypeptide: tRNA 5-methylaminomethyl-2-thiouridine biosynthesis bifunctional protein MnmC (697 aa).

Residues 1–272 form a tRNA (mnm(5)s(2)U34)-methyltransferase region; it reads MPKPASMAMN…KREMLTAVMS (272 aa). Residues 300–697 form an FAD-dependent cmnm(5)s(2)U34 oxidoreductase region; the sequence is IGAGVAGLLT…HKHKTRQAVI (398 aa).

The protein in the N-terminal section; belongs to the methyltransferase superfamily. tRNA (mnm(5)s(2)U34)-methyltransferase family. It in the C-terminal section; belongs to the DAO family. The cofactor is FAD.

It localises to the cytoplasm. It carries out the reaction 5-aminomethyl-2-thiouridine(34) in tRNA + S-adenosyl-L-methionine = 5-methylaminomethyl-2-thiouridine(34) in tRNA + S-adenosyl-L-homocysteine + H(+). Its function is as follows. Catalyzes the last two steps in the biosynthesis of 5-methylaminomethyl-2-thiouridine (mnm(5)s(2)U) at the wobble position (U34) in tRNA. Catalyzes the FAD-dependent demodification of cmnm(5)s(2)U34 to nm(5)s(2)U34, followed by the transfer of a methyl group from S-adenosyl-L-methionine to nm(5)s(2)U34, to form mnm(5)s(2)U34. The chain is tRNA 5-methylaminomethyl-2-thiouridine biosynthesis bifunctional protein MnmC from Psychrobacter cryohalolentis (strain ATCC BAA-1226 / DSM 17306 / VKM B-2378 / K5).